A 171-amino-acid chain; its full sequence is Ribosome maturation factor RimM (171 aa).

Residues 97-170 form the PRC barrel domain; it reads KLNYFSWDHY…IIYMKLPVGL (74 aa).

Belongs to the RimM family. In terms of assembly, binds ribosomal protein uS19.

It is found in the cytoplasm. In terms of biological role, an accessory protein needed during the final step in the assembly of 30S ribosomal subunit, possibly for assembly of the head region. Essential for efficient processing of 16S rRNA. May be needed both before and after RbfA during the maturation of 16S rRNA. It has affinity for free ribosomal 30S subunits but not for 70S ribosomes. In Azobacteroides pseudotrichonymphae genomovar. CFP2, this protein is Ribosome maturation factor RimM.